We begin with the raw amino-acid sequence, 79 residues long: Cyclotide phyb-A (79 aa).

The propeptide occupies 1–43; that stretch reads MVGVNSLRSALYLIVLILFVQLTYFSDARVMDVDLSRAFLPLT. The segment at residues 44 to 73 is a cross-link (cyclopeptide (Gly-Asn)); sequence GIGCGESCVWIPCVSAAIGCSCSNKICYRN. 3 disulfides stabilise this stretch: Cys-47-Cys-63, Cys-51-Cys-65, and Cys-56-Cys-70. A propeptide spanning residues 74 to 79 is cleaved from the precursor; the sequence is GIIPKK.

This is a cyclic peptide. Post-translationally, contains 3 disulfide bonds. In terms of tissue distribution, expressed in midvein, lamina and periphery of leaves (at protein level).

Its function is as follows. Probably participates in a plant defense mechanism. The polypeptide is Cyclotide phyb-A (Petunia hybrida (Petunia)).